The sequence spans 455 residues: MTLTQEFDTIAAISTPLGEGAIAIVRLSGTDALKIAQSVYKGKNLTQVASHTINYGHIFEEKRLVDEVMVSVMRAPKTFTREDIVEINTHGGIAVTQEILQLLLRNGARLAEPGEFTKRAFLNGRIDLAQAESVMDLIRAKTDKAANIAVKQLDGSLSKMINNIRQEILESLAQVEVNIDYPEYDDVETMTSQMLLEKTAHFEQLLENLLSTAKRGKILREGLKTAIIGRPNVGKSSLLNQLLREEKAIVTDIAGTTRDVITEFANIGGVPLELVDTAGIRETDDLVEAIGVERSKKALAEADLVLLVLDASNELTDKDLELLELSKNSNRIVLLNKTDLPEKIDSTQISGDFIRISALKNENLNAVEEKINQIFFAGEIEAKDATVLSNARHISIVEEALKALKEANSGLALGLPVDLIQVDVTRCWQLLGEITGEAAPDELITQLFSQFCLGK.

(6S)-5-formyl-5,6,7,8-tetrahydrofolate is bound by residues Arg-26, Glu-86, and Arg-125. The 155-residue stretch at 222–376 folds into the TrmE-type G domain; the sequence is GLKTAIIGRP…VEEKINQIFF (155 aa). Asn-232 provides a ligand contact to K(+). GTP-binding positions include 232–237, 251–257, and 276–279; these read NVGKSS, TDIAGTT, and DTAG. Mg(2+) is bound at residue Ser-236. K(+) is bound by residues Thr-251, Ile-253, and Thr-256. Mg(2+) is bound at residue Thr-257. Lys-455 is a (6S)-5-formyl-5,6,7,8-tetrahydrofolate binding site.

The protein belongs to the TRAFAC class TrmE-Era-EngA-EngB-Septin-like GTPase superfamily. TrmE GTPase family. Homodimer. Heterotetramer of two MnmE and two MnmG subunits. K(+) is required as a cofactor.

The protein localises to the cytoplasm. Exhibits a very high intrinsic GTPase hydrolysis rate. Involved in the addition of a carboxymethylaminomethyl (cmnm) group at the wobble position (U34) of certain tRNAs, forming tRNA-cmnm(5)s(2)U34. In Lactococcus lactis subsp. lactis (strain IL1403) (Streptococcus lactis), this protein is tRNA modification GTPase MnmE.